A 192-amino-acid chain; its full sequence is Adenylate kinase (192 aa).

Position 12–17 (12–17) interacts with ATP; the sequence is GSGKTT. The segment at 34–63 is NMP; it reads STGDLLRAEVASGSELGKTIDSFISKGNLV. AMP-binding positions include Thr-35, Arg-40, 61 to 63, 88 to 91, and Gln-95; these read NLV and GYPR. The segment at 130–136 is LID; that stretch reads GRNRGTD. Position 131 (Arg-131) interacts with ATP. AMP-binding residues include Arg-133 and Arg-145. Residue Arg-173 participates in ATP binding.

Belongs to the adenylate kinase family. Monomer.

It localises to the cytoplasm. It catalyses the reaction AMP + ATP = 2 ADP. It functions in the pathway purine metabolism; AMP biosynthesis via salvage pathway; AMP from ADP: step 1/1. In terms of biological role, catalyzes the reversible transfer of the terminal phosphate group between ATP and AMP. Plays an important role in cellular energy homeostasis and in adenine nucleotide metabolism. This is Adenylate kinase from Campylobacter jejuni (strain RM1221).